Here is a 294-residue protein sequence, read N- to C-terminus: Elongation factor Ts (294 aa).

Residues 80-83 (TDFV) form an involved in Mg(2+) ion dislocation from EF-Tu region.

Belongs to the EF-Ts family.

Its subcellular location is the cytoplasm. Its function is as follows. Associates with the EF-Tu.GDP complex and induces the exchange of GDP to GTP. It remains bound to the aminoacyl-tRNA.EF-Tu.GTP complex up to the GTP hydrolysis stage on the ribosome. This is Elongation factor Ts from Polynucleobacter asymbioticus (strain DSM 18221 / CIP 109841 / QLW-P1DMWA-1) (Polynucleobacter necessarius subsp. asymbioticus).